We begin with the raw amino-acid sequence, 333 residues long: PDZ domain-containing protein GIPC1 (333 aa).

A compositionally biased stretch (basic residues) spans Met1–Ala11. Residues Met1 to Ala53 are disordered. Over residues Leu27–Ala39 the composition is skewed to gly residues. Ser68 is modified (phosphoserine). The 81-residue stretch at Glu133 to Glu213 folds into the PDZ domain. Ser222, Ser225, and Ser232 each carry phosphoserine. Residues Gln223 to Arg244 form a disordered region. A compositionally biased stretch (gly residues) spans Gly228–Arg240. Thr242 carries the post-translational modification Phosphothreonine. Ser247 is modified (phosphoserine).

The protein belongs to the GIPC family. Interacts with GLUT1 (C-terminus), ACTN1, KIF1B, MYO6 and PLEKHG5. Interacts with RGS19 C-terminus. Interacts with SDC4/syndecan-4 and SEMA4C/semaphorin-4C. Widely expressed.

Its subcellular location is the cytoplasm. It localises to the membrane. In terms of biological role, inhibits endothelial cell migration (in vitro). May be involved in G protein-linked signaling. This chain is PDZ domain-containing protein GIPC1 (Gipc1), found in Mus musculus (Mouse).